A 97-amino-acid chain; its full sequence is Co-chaperonin GroES (97 aa).

It belongs to the GroES chaperonin family. As to quaternary structure, heptamer of 7 subunits arranged in a ring. Interacts with the chaperonin GroEL.

Its subcellular location is the cytoplasm. In terms of biological role, together with the chaperonin GroEL, plays an essential role in assisting protein folding. The GroEL-GroES system forms a nano-cage that allows encapsulation of the non-native substrate proteins and provides a physical environment optimized to promote and accelerate protein folding. GroES binds to the apical surface of the GroEL ring, thereby capping the opening of the GroEL channel. In Blochmanniella floridana, this protein is Co-chaperonin GroES.